The primary structure comprises 968 residues: RNA polymerase-associated protein RapA (968 aa).

One can recognise a Helicase ATP-binding domain in the interval 164-334 (DVGRRHAPRV…FARLRLLDPN (171 aa)). 177–184 (DEVGLGKT) is a binding site for ATP. The DEAH box motif lies at 280-283 (DEAH). A Helicase C-terminal domain is found at 490–662 (RVEWLMGYLT…YLASPDQTEG (173 aa)).

Belongs to the SNF2/RAD54 helicase family. RapA subfamily. As to quaternary structure, interacts with the RNAP. Has a higher affinity for the core RNAP than for the holoenzyme. Its ATPase activity is stimulated by binding to RNAP.

Its function is as follows. Transcription regulator that activates transcription by stimulating RNA polymerase (RNAP) recycling in case of stress conditions such as supercoiled DNA or high salt concentrations. Probably acts by releasing the RNAP, when it is trapped or immobilized on tightly supercoiled DNA. Does not activate transcription on linear DNA. Probably not involved in DNA repair. The polypeptide is RNA polymerase-associated protein RapA (Shigella boydii serotype 18 (strain CDC 3083-94 / BS512)).